Here is a 197-residue protein sequence, read N- to C-terminus: Cytochrome c-L (197 aa).

An N-terminal signal peptide occupies residues 1–25; that stretch reads MMNRVKIGTALLGLTLAGIALPALA. Heme c is bound by residues cysteine 90, cysteine 93, and histidine 94.

Binds 1 heme c group covalently per subunit.

It localises to the periplasm. Electron acceptor for MDH. Acts in methanol oxidation. This chain is Cytochrome c-L (moxG), found in Methylorubrum extorquens (strain ATCC 14718 / DSM 1338 / JCM 2805 / NCIMB 9133 / AM1) (Methylobacterium extorquens).